Here is a 715-residue protein sequence, read N- to C-terminus: Harpin secretion protein HrpI (715 aa).

7 helical membrane-spanning segments follow: residues 23–43, 45–65, 69–89, 115–135, 203–223, 241–261, and 298–318; these read GAAIVMSIVFMMIIPLPTGLI, VLIALNICISSLLIVLAMYLP, AFSTFPSVLLLTTMFRLALSI, GNLAVGLVIFLILTVVNFLVI, AIAGLVIVFINMIGGFAIGVL, IGDGLIAQIPALLISLTAGMI, and MLGFALLPGMPTAVFVIISAI.

It belongs to the FHIPEP (flagella/HR/invasion proteins export pore) family.

The protein resides in the cell inner membrane. Its function is as follows. Involved in the secretion of harpin; a proteinaceous elicitor of the hypersensitivity response in plants. This is Harpin secretion protein HrpI (hrpI) from Erwinia amylovora (Fire blight bacteria).